Consider the following 1033-residue polypeptide: uncharacterized protein (1033 aa).

This is an uncharacterized protein from Mycoplasma pneumoniae (strain ATCC 29342 / M129 / Subtype 1) (Mycoplasmoides pneumoniae).